A 92-amino-acid chain; its full sequence is Large ribosomal subunit protein bL28 (92 aa).

The protein belongs to the bacterial ribosomal protein bL28 family.

This Borrelia garinii subsp. bavariensis (strain ATCC BAA-2496 / DSM 23469 / PBi) (Borreliella bavariensis) protein is Large ribosomal subunit protein bL28.